The sequence spans 388 residues: Processive diacylglycerol beta-glucosyltransferase (388 aa).

Belongs to the glycosyltransferase 28 family. UgtP subfamily.

It localises to the cell membrane. The enzyme catalyses a 1,2-diacyl-3-O-(beta-D-glucopyranosyl)-sn-glycerol + UDP-alpha-D-glucose = a 1,2-diacyl-3-O-(beta-D-Glc-(1-&gt;6)-beta-D-Glc)-sn-glycerol + UDP + H(+). It carries out the reaction a 1,2-diacyl-3-O-(beta-D-Glc-(1-&gt;6)-beta-D-Glc)-sn-glycerol + UDP-alpha-D-glucose = a 1,2-diacyl-3-O-(beta-D-Glc-(1-&gt;6)-beta-D-Glc-(1-&gt;6)-beta-D-Glc)-sn-glycerol + UDP + H(+). The catalysed reaction is a 1,2-diacyl-sn-glycerol + UDP-alpha-D-glucose = a 1,2-diacyl-3-O-(beta-D-glucopyranosyl)-sn-glycerol + UDP + H(+). The protein operates within glycolipid metabolism; diglucosyl-diacylglycerol biosynthesis. Its function is as follows. Processive glucosyltransferase involved in the biosynthesis of both the bilayer- and non-bilayer-forming membrane glucolipids. Is able to successively transfer up to three glucosyl residues to diacylglycerol (DAG), thereby catalyzing the formation of beta-monoglucosyl-DAG (3-O-(beta-D-glucopyranosyl)-1,2-diacyl-sn-glycerol), beta-diglucosyl-DAG (3-O-(beta-D-glucopyranosyl-beta-(1-&gt;6)-D-glucopyranosyl)-1,2-diacyl-sn-glycerol) and beta-triglucosyl-DAG (3-O-(beta-D-glucopyranosyl-beta-(1-&gt;6)-D-glucopyranosyl-beta-(1-&gt;6)-D-glucopyranosyl)-1,2-diacyl-sn-glycerol). Beta-diglucosyl-DAG is the predominant glycolipid found in Bacillales and is also used as a membrane anchor for lipoteichoic acid (LTA). In Bacillus thuringiensis (strain Al Hakam), this protein is Processive diacylglycerol beta-glucosyltransferase.